The sequence spans 256 residues: MTMPFYTSPEQLMRERSELARKGIARGRSVVVLKYAGGVLFVAENPSTTLHKVSEIYDRIGFAAVGRYSEFESLRVAGVRIADVRGYSYDRRDVTGRALANTYAQHLGAIFTEQIKPFEVEICVAEVGQTADNDQLYRLTYDGSIVDEPQYVVMGGQADTITTTLKDSFSDGLELAEAAGLAIRALSSGGEGTRELGVGQLEVAVLDRARPNRTFRRITGAALKALLPSQEESGSTDGEASGDAGDDKKTGDDKKS.

Positions 226-256 (LLPSQEESGSTDGEASGDAGDDKKTGDDKKS) are disordered. Basic and acidic residues predominate over residues 245–256 (GDDKKTGDDKKS).

The protein belongs to the peptidase T1A family. The 20S proteasome core is composed of 14 alpha and 14 beta subunits that assemble into four stacked heptameric rings, resulting in a barrel-shaped structure. The two inner rings, each composed of seven catalytic beta subunits, are sandwiched by two outer rings, each composed of seven alpha subunits. The catalytic chamber with the active sites is on the inside of the barrel. Has a gated structure, the ends of the cylinder being occluded by the N-termini of the alpha-subunits. Is capped by the proteasome-associated ATPase, ARC.

The protein localises to the cytoplasm. Its pathway is protein degradation; proteasomal Pup-dependent pathway. The formation of the proteasomal ATPase ARC-20S proteasome complex, likely via the docking of the C-termini of ARC into the intersubunit pockets in the alpha-rings, may trigger opening of the gate for substrate entry. Interconversion between the open-gate and close-gate conformations leads to a dynamic regulation of the 20S proteasome proteolysis activity. Component of the proteasome core, a large protease complex with broad specificity involved in protein degradation. The protein is Proteasome subunit alpha of Saccharopolyspora erythraea (strain ATCC 11635 / DSM 40517 / JCM 4748 / NBRC 13426 / NCIMB 8594 / NRRL 2338).